We begin with the raw amino-acid sequence, 99 residues long: Ubiquitin-related modifier 1 (99 aa).

A 1-thioglycine modification is found at G99. Residue G99 forms a Glycyl lysine isopeptide (Gly-Lys) (interchain with K-? in acceptor proteins) linkage.

Belongs to the URM1 family. In terms of processing, C-terminal thiocarboxylation occurs in 2 steps, it is first acyl-adenylated (-COAMP) via the hesA/moeB/thiF part of UBA4, then thiocarboxylated (-COSH) via the rhodanese domain of UBA4.

The protein resides in the cytoplasm. It functions in the pathway tRNA modification; 5-methoxycarbonylmethyl-2-thiouridine-tRNA biosynthesis. In terms of biological role, acts as a sulfur carrier required for 2-thiolation of mcm(5)S(2)U at tRNA wobble positions of cytosolic tRNA(Lys), tRNA(Glu) and tRNA(Gln). Serves as sulfur donor in tRNA 2-thiolation reaction by being thiocarboxylated (-COSH) at its C-terminus by the MOCS3 homolog UBA4. The sulfur is then transferred to tRNA to form 2-thiolation of mcm(5)S(2)U. Prior mcm(5) tRNA modification by the elongator complex is required for 2-thiolation. Also acts as a ubiquitin-like protein (UBL) that is covalently conjugated via an isopeptide bond to lysine residues of target proteins such as AHP1. The thiocarboxylated form serves as substrate for conjugation and oxidative stress specifically induces the formation of UBL-protein conjugates. In Yarrowia lipolytica (strain CLIB 122 / E 150) (Yeast), this protein is Ubiquitin-related modifier 1.